A 111-amino-acid polypeptide reads, in one-letter code: Resistin-like alpha (111 aa).

Residues 1 to 23 form the signal peptide; the sequence is MKTTTCSLLICISLLQLMVPVNT. Disulfide bonds link C55–C108, C67–C107, C76–C93, C78–C95, and C82–C97.

This sequence belongs to the resistin/FIZZ family. As to quaternary structure, monomer. In terms of tissue distribution, highest levels in adipose tissue.

The protein localises to the secreted. Functionally, probable hormone. Plays a role in pulmonary vascular remodeling. In Mus musculus (Mouse), this protein is Resistin-like alpha (Retnla).